We begin with the raw amino-acid sequence, 271 residues long: Putative hydro-lyase Mrad2831_3350 (271 aa).

Belongs to the D-glutamate cyclase family.

The polypeptide is Putative hydro-lyase Mrad2831_3350 (Methylobacterium radiotolerans (strain ATCC 27329 / DSM 1819 / JCM 2831 / NBRC 15690 / NCIMB 10815 / 0-1)).